The sequence spans 294 residues: Ribosomal RNA small subunit methyltransferase A (294 aa).

S-adenosyl-L-methionine is bound by residues asparagine 31, leucine 33, glycine 58, glutamate 79, aspartate 104, and asparagine 129.

Belongs to the class I-like SAM-binding methyltransferase superfamily. rRNA adenine N(6)-methyltransferase family. RsmA subfamily.

It is found in the cytoplasm. The catalysed reaction is adenosine(1518)/adenosine(1519) in 16S rRNA + 4 S-adenosyl-L-methionine = N(6)-dimethyladenosine(1518)/N(6)-dimethyladenosine(1519) in 16S rRNA + 4 S-adenosyl-L-homocysteine + 4 H(+). In terms of biological role, specifically dimethylates two adjacent adenosines (A1518 and A1519) in the loop of a conserved hairpin near the 3'-end of 16S rRNA in the 30S particle. May play a critical role in biogenesis of 30S subunits. The protein is Ribosomal RNA small subunit methyltransferase A of Oceanobacillus iheyensis (strain DSM 14371 / CIP 107618 / JCM 11309 / KCTC 3954 / HTE831).